Here is a 344-residue protein sequence, read N- to C-terminus: Arginine N-succinyltransferase (344 aa).

L125 contacts succinyl-CoA. H229 (proton donor) is an active-site residue.

The protein belongs to the arginine N-succinyltransferase family.

The catalysed reaction is succinyl-CoA + L-arginine = N(2)-succinyl-L-arginine + CoA + H(+). Its pathway is amino-acid degradation; L-arginine degradation via AST pathway; L-glutamate and succinate from L-arginine: step 1/5. Its function is as follows. Catalyzes the transfer of succinyl-CoA to arginine to produce N(2)-succinylarginine. This is Arginine N-succinyltransferase from Citrobacter koseri (strain ATCC BAA-895 / CDC 4225-83 / SGSC4696).